We begin with the raw amino-acid sequence, 380 residues long: Alkaline protease (380 aa).

An N-terminal signal peptide occupies residues 1-27; sequence MKKPLGKIVASTALLISVAFSSSIASA. Residues 28 to 112 constitute a propeptide that is removed on maturation; the sequence is AEEAKEKYLI…EEDAEVTTMA (85 aa). In terms of domain architecture, Inhibitor I9 spans 34-111; it reads KYLIGFNEQE…IEEDAEVTTM (78 aa). A Ca(2+)-binding site is contributed by Gln-113. The Peptidase S8 domain maps to 116 to 379; that stretch reads PWGISRVQAP…SGLVNAEAAT (264 aa). Asp-143 functions as the Charge relay system in the catalytic mechanism. Residue Asp-151 participates in Ca(2+) binding. His-173 functions as the Charge relay system in the catalytic mechanism. Positions 184, 186, 188, 190, 274, 276, and 279 each coordinate Ca(2+). Ser-326 serves as the catalytic Charge relay system.

This sequence belongs to the peptidase S8 family. The cofactor is Ca(2+).

The protein resides in the secreted. In Alkalihalobacillus alcalophilus (Bacillus alcalophilus), this protein is Alkaline protease.